The chain runs to 1133 residues: Exportin-4 (1133 aa).

Belongs to the exportin family. As to quaternary structure, interacts with Ran and cargo proteins in a GTP-dependent manner.

The protein resides in the cytoplasm. The protein localises to the nucleus. In terms of biological role, mediates the nuclear export of proteins (cargos). In the nucleus binds cooperatively to its cargo and to the GTPase Ran in its active GTP-bound form. Docking of this trimeric complex to the nuclear pore complex (NPC) is mediated through binding to nucleoporins. Upon transit of a nuclear export complex into the cytoplasm, disassembling of the complex and hydrolysis of Ran-GTP to Ran-GDP cause release of the cargo from the export receptor. Xpo4 then return to the nuclear compartment and mediate another round of transport. The directionality of nuclear export is thought to be conferred by an asymmetric distribution of the GTP- and GDP-bound forms of Ran between the cytoplasm and nucleus. The sequence is that of Exportin-4 (xpo4) from Dictyostelium discoideum (Social amoeba).